Consider the following 201-residue polypeptide: Myosin regulatory light chain 2 (201 aa).

Residues 1–48 (MADKDKKVKKKKAKEDAPAEEAPAAAAPAGDRQSSRGSRKAKRTGSNV) are disordered. Residues 20 to 29 (EEAPAAAAPA) are compositionally biased toward low complexity. Ser-46 is subject to Phosphoserine. EF-hand domains are found at residues 55-90 (KQVA…LGRL), 125-158 (DEDD…WGDK), and 159-194 (FSAD…SAEE). The Ca(2+) site is built by Asp-68, Asp-70, Asp-72, and Asp-79.

As to quaternary structure, myosin is a hexamer of 2 heavy chains and 4 light chains.

In Bombyx mori (Silk moth), this protein is Myosin regulatory light chain 2.